A 212-amino-acid polypeptide reads, in one-letter code: MNYPHPIIAREGWPFIAIAAVVALLIHFVAGFGIAWIFWLLLIFVVQFFRDPARPIPTQANAVLCPADGRIVAVETAHDPYANREALKISVFMNVFNVHSQRSPVDGAISKVEYFPGAYLNAAVDKASTENERNAIVIETASGATVTSVQIAGLIARRILCYVRAGEPLTRGQRYGFIRFGSRVDVYLPVGSRPRVSIGEKVSASSTILAEL.

The Schiff-base intermediate with substrate; via pyruvic acid role is filled by Ser-182. Ser-182 bears the Pyruvic acid (Ser); by autocatalysis mark.

The protein belongs to the phosphatidylserine decarboxylase family. PSD-A subfamily. As to quaternary structure, heterodimer of a large membrane-associated beta subunit and a small pyruvoyl-containing alpha subunit. Pyruvate is required as a cofactor. In terms of processing, is synthesized initially as an inactive proenzyme. Formation of the active enzyme involves a self-maturation process in which the active site pyruvoyl group is generated from an internal serine residue via an autocatalytic post-translational modification. Two non-identical subunits are generated from the proenzyme in this reaction, and the pyruvate is formed at the N-terminus of the alpha chain, which is derived from the carboxyl end of the proenzyme. The post-translation cleavage follows an unusual pathway, termed non-hydrolytic serinolysis, in which the side chain hydroxyl group of the serine supplies its oxygen atom to form the C-terminus of the beta chain, while the remainder of the serine residue undergoes an oxidative deamination to produce ammonia and the pyruvoyl prosthetic group on the alpha chain.

The protein localises to the cell membrane. It carries out the reaction a 1,2-diacyl-sn-glycero-3-phospho-L-serine + H(+) = a 1,2-diacyl-sn-glycero-3-phosphoethanolamine + CO2. It functions in the pathway phospholipid metabolism; phosphatidylethanolamine biosynthesis; phosphatidylethanolamine from CDP-diacylglycerol: step 2/2. Its function is as follows. Catalyzes the formation of phosphatidylethanolamine (PtdEtn) from phosphatidylserine (PtdSer). This chain is Phosphatidylserine decarboxylase proenzyme, found in Paraburkholderia phymatum (strain DSM 17167 / CIP 108236 / LMG 21445 / STM815) (Burkholderia phymatum).